An 894-amino-acid chain; its full sequence is MKMSEQLSDRYNPADVESRTYEWWEKNGYFKAQDQSTKPPFSIILPPPNVTGFLHMGHALDHTIQDMMIRWKRMNGYNTMWLPGTDHAGIATQSVVERELKKDGVTRHDLGREKFVEKVWDWKHQYGNRIYGQMRRLGDSCDWDRAVFTLDEGVSKAVRKVFVSLHKKGLIYRGQRLVNWSGPLETAISDLEVEHKQIKGSLYHVKYPLEDGSGFLVVATTRPETMLGDSAVCVHPEDERYKHLIGKNVLLPLTNRKIKIIADTYVDKEFGSGVVKITPAHDFNDYKIGKTHNLEFINILTKKAEINENGGVYAGLKVQEARKRILEDLKAQDLLEKEEPHVHSVGHCSRSGAVVEPYLSEQWFVKMEALAVPAKRVAENGTIRFEPESWTKVYLHWLNNIEDWCISRQLWWGHRIPVWYCEDCNHQTVAETDVTACEKCGSTKLHQDDDVLDTWFSSALWPFSTMGWPNETETLKTFYPTSYLVTGHDIIFFWVARMIMMGLEFQRDVPFRTVYIHGLVRDSQGRKMSKSLGNSIDPVEMIEKHGADALRFTFAAHLYSGKDFKFSEQRLEGYRNFMNKVWNAARFALSNLSDFKAPTEGVKALPNKVHISVFDQWIITKLEEVTKTVEEAMEQERFSDASTALYQFIWNQFCDWYIEFTKPILNGNNAEEKAATQLVIAQVLNRIMRLLHPFAPFISEEIYQKLPIKGTACIVDQYPNARNDKEFLSLGSAQAALEIDIVKEVITAIRNIRGENRISPAVKLNVRLGVTNDQTQKILGNNRTALMTMGRLENMEIGPEGDMMKCAVAPVVVKDASVKVIIPLEGLVDFDEEVKRINKSIEKLTRDIGMLSGKLSNEKFVANADEEVVAADRALLAQSKVQLDSLRDALTRFQ.

The 'HIGH' region motif lies at 48-58 (PNVTGFLHMGH). A 'KMSKS' region motif is present at residues 527-531 (KMSKS). Lysine 530 contacts ATP. The stretch at 827–852 (LVDFDEEVKRINKSIEKLTRDIGMLS) forms a coiled coil.

Belongs to the class-I aminoacyl-tRNA synthetase family. ValS type 1 subfamily. As to quaternary structure, monomer.

Its subcellular location is the cytoplasm. It carries out the reaction tRNA(Val) + L-valine + ATP = L-valyl-tRNA(Val) + AMP + diphosphate. Catalyzes the attachment of valine to tRNA(Val). As ValRS can inadvertently accommodate and process structurally similar amino acids such as threonine, to avoid such errors, it has a 'posttransfer' editing activity that hydrolyzes mischarged Thr-tRNA(Val) in a tRNA-dependent manner. This Bdellovibrio bacteriovorus (strain ATCC 15356 / DSM 50701 / NCIMB 9529 / HD100) protein is Valine--tRNA ligase.